The primary structure comprises 277 residues: Outer kinetochore KNL1 complex subunit ZWINT (277 aa).

The interval 80-155 (ASEDTSRQKA…MEKRRAVQNQ (76 aa)) is interaction with NDC80 and ZW10. Residues 104 to 217 (REHVEAIKIG…RYQTFLQLLY (114 aa)) are a coiled coil. The interval 228-277 (AEAEAENLPDDKPQQPTRPQEQSTGDTMGRDPGVSFKAVGLQPAGDVNLP) is disordered. Residues 241–253 (QQPTRPQEQSTGD) show a composition bias toward polar residues.

Component of the KNL1 complex composed of KNL1 and ZWINT. Part of the ten-subunit outer kinetochore KMN network that includes the KNL1, MIS12 and NDC80 complexes; a bioriented kinetochore contains approximately 150 copies of the network. Interacts with the MIS12 complex subunits MIS12 DSN1, and PMF1. Interacts with the NDC80 complex subunit NDC80 during mitosis. Interacts with ZW10. Interacts with CETN3.

It is found in the nucleus. The protein resides in the chromosome. The protein localises to the centromere. Its subcellular location is the kinetochore. Functionally, acts as a component of the outer kinetochore KNL1 complex that serves as a docking point for spindle assembly checkpoint components and mediates microtubule-kinetochore interactions. Kinetochores, consisting of a centromere-associated inner segment and a microtubule-contacting outer segment, play a crucial role in chromosome segregation by mediating the physical connection between centromeric DNA and spindle microtubules. The outer kinetochore is made up of the ten-subunit KMN network, comprising the MIS12, NDC80 and KNL1 complexes, and auxiliary microtubule-associated components; together they connect the outer kinetochore with the inner kinetochore, bind microtubules, and mediate interactions with mitotic checkpoint proteins that delay anaphase until chromosomes are bioriented on the spindle. Targets the RZZ complex to the kinetochore at prometaphase. Recruits MAD2L1 to the kinetochore, but is not required for BUB1B localization. In addition to orienting mitotic chromosomes, it is also essential for alignment of homologous chromosomes during meiotic metaphase I. In meiosis I, required to activate the spindle assembly checkpoint at unattached kinetochores to correct erroneous kinetochore-microtubule attachments. The chain is Outer kinetochore KNL1 complex subunit ZWINT (ZWINT) from Homo sapiens (Human).